The sequence spans 132 residues: Large ribosomal subunit protein bL17 (132 aa).

This sequence belongs to the bacterial ribosomal protein bL17 family. In terms of assembly, part of the 50S ribosomal subunit. Contacts protein L32.

This is Large ribosomal subunit protein bL17 from Ruthia magnifica subsp. Calyptogena magnifica.